The sequence spans 300 residues: Protoheme IX farnesyltransferase (300 aa).

The next 9 helical transmembrane spans lie at 24–44, 48–68, 94–114, 118–138, 146–166, 172–192, 217–237, 239–259, and 278–298; these read VTQLAVFCAVIGMFLATPGMV, VLLGGTIGIGLLAGSAFAINC, LQILAFSTVLGGLGAWTLYTF, LTMWLTIATFVGYAVIYTLLL, IVIGGASGAMPPALGWAAVTG, AWILVLIIFVWTPPHFWVLAL, LHILLYTVILFAVTMMPFISG, SGAVYLTSAVLLGALFLAYAW, and IVYLSLLFAALLVDHYARPVI.

The protein belongs to the UbiA prenyltransferase family. Protoheme IX farnesyltransferase subfamily.

It is found in the cell inner membrane. The enzyme catalyses heme b + (2E,6E)-farnesyl diphosphate + H2O = Fe(II)-heme o + diphosphate. The protein operates within porphyrin-containing compound metabolism; heme O biosynthesis; heme O from protoheme: step 1/1. Converts heme B (protoheme IX) to heme O by substitution of the vinyl group on carbon 2 of heme B porphyrin ring with a hydroxyethyl farnesyl side group. This chain is Protoheme IX farnesyltransferase, found in Burkholderia pseudomallei (strain 1106a).